We begin with the raw amino-acid sequence, 397 residues long: Riboflavin biosynthesis protein RibBA (397 aa).

A DHBP synthase region spans residues 1-199; that stretch reads MFHRIEEALE…IEDLIAYRRH (199 aa). Residues 26–27, Asp-31, 138–142, and Glu-162 each bind D-ribulose 5-phosphate; these read RE and RAGHT. Glu-27 contacts Mg(2+). A Mg(2+)-binding site is contributed by His-141. The segment at 200–397 is GTP cyclohydrolase II; the sequence is HETFVTKEVE…VTKLGHLLNL (198 aa). 250-254 serves as a coordination point for GTP; sequence RVHSE. Cys-255, Cys-266, and Cys-268 together coordinate Zn(2+). Residues Gln-271, 293-295, and Thr-315 contribute to the GTP site; that span reads EGR. The active-site Proton acceptor; for GTP cyclohydrolase activity is Asp-327. The Nucleophile; for GTP cyclohydrolase activity role is filled by Arg-329. Thr-350 and Lys-355 together coordinate GTP.

It in the N-terminal section; belongs to the DHBP synthase family. In the C-terminal section; belongs to the GTP cyclohydrolase II family. It depends on Mg(2+) as a cofactor. Mn(2+) is required as a cofactor. Zn(2+) serves as cofactor.

The catalysed reaction is D-ribulose 5-phosphate = (2S)-2-hydroxy-3-oxobutyl phosphate + formate + H(+). It carries out the reaction GTP + 4 H2O = 2,5-diamino-6-hydroxy-4-(5-phosphoribosylamino)-pyrimidine + formate + 2 phosphate + 3 H(+). Its pathway is cofactor biosynthesis; riboflavin biosynthesis; 2-hydroxy-3-oxobutyl phosphate from D-ribulose 5-phosphate: step 1/1. It functions in the pathway cofactor biosynthesis; riboflavin biosynthesis; 5-amino-6-(D-ribitylamino)uracil from GTP: step 1/4. Its function is as follows. Catalyzes the conversion of D-ribulose 5-phosphate to formate and 3,4-dihydroxy-2-butanone 4-phosphate. Functionally, catalyzes the conversion of GTP to 2,5-diamino-6-ribosylamino-4(3H)-pyrimidinone 5'-phosphate (DARP), formate and pyrophosphate. The protein is Riboflavin biosynthesis protein RibBA of Bacillus cytotoxicus (strain DSM 22905 / CIP 110041 / 391-98 / NVH 391-98).